Here is a 101-residue protein sequence, read N- to C-terminus: Large ribosomal subunit protein uL23 (101 aa).

Belongs to the universal ribosomal protein uL23 family. Part of the 50S ribosomal subunit. Contacts protein L29, and trigger factor when it is bound to the ribosome.

Functionally, one of the early assembly proteins it binds 23S rRNA. One of the proteins that surrounds the polypeptide exit tunnel on the outside of the ribosome. Forms the main docking site for trigger factor binding to the ribosome. The chain is Large ribosomal subunit protein uL23 from Trichodesmium erythraeum (strain IMS101).